Consider the following 109-residue polypeptide: Large ribosomal subunit protein uL24 (109 aa).

Belongs to the universal ribosomal protein uL24 family. As to quaternary structure, part of the 50S ribosomal subunit.

One of two assembly initiator proteins, it binds directly to the 5'-end of the 23S rRNA, where it nucleates assembly of the 50S subunit. Its function is as follows. One of the proteins that surrounds the polypeptide exit tunnel on the outside of the subunit. The polypeptide is Large ribosomal subunit protein uL24 (Ehrlichia chaffeensis (strain ATCC CRL-10679 / Arkansas)).